The primary structure comprises 447 residues: Na(+)/H(+) antiporter NhaA 2 (447 aa).

10 consecutive transmembrane segments (helical) span residues 34-54 (VGGV…NSPW), 77-97 (LTLG…VVGL), 115-135 (ALPI…FVLV), 146-166 (GWAI…AVIG), 176-196 (FLLT…AVFY), 200-220 (INGL…LCVQ), 290-310 (VSAG…SIGG), 321-341 (PITL…IVLT), 359-379 (WVDV…SLLI), and 393-413 (FVKI…AVVL).

Belongs to the NhaA Na(+)/H(+) (TC 2.A.33) antiporter family.

The protein localises to the cell membrane. It carries out the reaction Na(+)(in) + 2 H(+)(out) = Na(+)(out) + 2 H(+)(in). Its function is as follows. Na(+)/H(+) antiporter that extrudes sodium in exchange for external protons. This Mycolicibacterium gilvum (strain PYR-GCK) (Mycobacterium gilvum (strain PYR-GCK)) protein is Na(+)/H(+) antiporter NhaA 2.